Reading from the N-terminus, the 320-residue chain is Cytochrome c biogenesis protein CcsA (320 aa).

Helical transmembrane passes span 13–33 (ISFS…FLLV), 46–66 (GMIV…IYSG), 73–93 (LYES…VSYL), 147–167 (MVLG…LLVI), 226–246 (IISL…VWAN), 259–274 (ETWA…IYFH), and 289–309 (VASM…LLGI).

This sequence belongs to the CcmF/CycK/Ccl1/NrfE/CcsA family. In terms of assembly, may interact with Ccs1.

The protein resides in the plastid. Its subcellular location is the chloroplast thylakoid membrane. Required during biogenesis of c-type cytochromes (cytochrome c6 and cytochrome f) at the step of heme attachment. In Gossypium barbadense (Sea Island cotton), this protein is Cytochrome c biogenesis protein CcsA.